The primary structure comprises 152 residues: Sulfur-rich protein (152 aa).

Positions 1–11 (MSTTPIVSGVT) are enriched in polar residues. Residues 1 to 21 (MSTTPIVSGVTSQNNSSENVS) form a disordered region. Residues 12–21 (SQNNSSENVS) are compositionally biased toward low complexity. A run of 2 helical transmembrane segments spans residues 44–64 (VGLA…LFIL) and 73–93 (IYLA…ILSM).

Its subcellular location is the membrane. This Chlamydia muridarum (strain MoPn / Nigg) protein is Sulfur-rich protein (srp).